Here is a 105-residue protein sequence, read N- to C-terminus: Protein FAM24A (105 aa).

The first 32 residues, 1–32 (MAKMFDLRTKIMIGIGSSLLVAAMVLLSVVFC), serve as a signal peptide directing secretion.

Belongs to the FAM24 family.

It is found in the secreted. The protein is Protein FAM24A (FAM24A) of Homo sapiens (Human).